The primary structure comprises 68 residues: Large ribosomal subunit protein uL29 (68 aa).

It belongs to the universal ribosomal protein uL29 family.

In Streptococcus uberis (strain ATCC BAA-854 / 0140J), this protein is Large ribosomal subunit protein uL29.